The chain runs to 193 residues: MEPFRIHKGTAAVLMNDNIDTDQIIPKQYLKRIERTGFGKFLFDEWRYDNERHENPNFPLNAPDRKGASILITGNNFGCGSSREHAPWALADYGFRVIIAGGFADIFYMNCMKNGMLPIVMDKEMREKLVKTDAREQIEVDLENEVITTSTHRFHFTIEKMWKEKLLNGLDEISITMQYEQEIKEYERRIAAY.

This sequence belongs to the LeuD family. LeuD type 1 subfamily. As to quaternary structure, heterodimer of LeuC and LeuD.

The enzyme catalyses (2R,3S)-3-isopropylmalate = (2S)-2-isopropylmalate. It participates in amino-acid biosynthesis; L-leucine biosynthesis; L-leucine from 3-methyl-2-oxobutanoate: step 2/4. Its function is as follows. Catalyzes the isomerization between 2-isopropylmalate and 3-isopropylmalate, via the formation of 2-isopropylmaleate. The protein is 3-isopropylmalate dehydratase small subunit of Bacillus anthracis (strain CDC 684 / NRRL 3495).